The primary structure comprises 553 residues: Solute carrier family 22 member 12 (553 aa).

A helical membrane pass occupies residues 10–30; the sequence is VGGLGRFQLFQTVALVTPILW. N-linked (GlcNAc...) asparagine glycosylation occurs at asparagine 56. The next 11 helical transmembrane spans lie at 146–166, 182–202, 204–224, 232–252, 260–280, 351–371, 378–398, 412–432, 435–455, 466–486, and 495–515; these read PMAQSIFLAGILVGAAVCGHA, LVSVSGTAAAFMPTFPLYCLF, FLLASAVAGVMMNTASLLMEW, LVMTLNALGFSFGQVLTGSVA, MLQLAVSAPFFLFFVYSWWLP, IISMLCWFAFGFTFYGLALDL, IFLLQALIGIVDFPVKTGSLL, FLVLPGLCILSNILVPHGMGV, SALAVLGLGCLGGAFTCITIF, MTAVGLCQVAARGGAMLGPLV, and WMPLLVYGVVPVLSGLAALLL. Residue serine 534 is modified to Phosphoserine. Phosphothreonine is present on threonine 542.

Belongs to the major facilitator (TC 2.A.1) superfamily. Organic cation transporter (TC 2.A.1.19) family. As to quaternary structure, interacts with PDZK1. N-glycosylated. Detected in kidney (at protein level). Detected in kidney cortex, in proximal tubules.

The protein resides in the apical cell membrane. It catalyses the reaction urate(out) + (S)-lactate(in) = urate(in) + (S)-lactate(out). It carries out the reaction nicotinate(in) + urate(out) = nicotinate(out) + urate(in). The enzyme catalyses urate(out) + n chloride(in) = urate(in) + n chloride(out). The catalysed reaction is orotate(out) + nicotinate(in) = orotate(in) + nicotinate(out). Its function is as follows. Electroneutral antiporter that translocates urate across the apical membrane of proximal tubular cells in exchange for monovalent organic or inorganic anions. Involved in renal reabsorption of urate and helps maintaining blood levels of uric acid. Mediates urate uptake by an exchange with organic anions such as (S)-lactate and nicotinate, and inorganic anion Cl(-). Other inorganic anions such as Br(-), I(-) and NO3(-) may also act as counteranions that exchange for urate. Also mediates orotate tubular uptake coupled with nicotinate efflux and to a lesser extent with lactate efflux, therefore displaying a potential role in orotate renal reabsorption. Orotate transport is Cl(-)-dependent. This Mus musculus (Mouse) protein is Solute carrier family 22 member 12.